Reading from the N-terminus, the 613-residue chain is Leucine-rich repeat receptor-like protein FASCIATED EAR2 (613 aa).

The N-terminal stretch at 1–28 (MLTATPLPHQLLATFLLVLASATQPAVP) is a signal peptide. Topologically, residues 29–573 (ASTDRAALLA…WLGGWHGENG (545 aa)) are extracellular. LRR repeat units lie at residues 79 to 103 (TPSV…PLAL), 104 to 128 (LRRL…LPRS), 130 to 150 (LALD…LPSS), 151 to 176 (LPAL…SFPA), 178 to 199 (LAAL…IVAD), 202 to 226 (NSAL…IAAV), 227 to 250 (RSLQ…IGNL), 251 to 274 (TYLQ…LAGC), 276 to 297 (QLLY…ELDA), 298 to 322 (LASL…LAGC), 324 to 346 (SLEV…VAKW), 347 to 370 (LSLK…MFSF), 372 to 394 (LLQW…GFNV), 435 to 459 (VQAT…LVDM), 460 to 483 (KGLE…LGGM), 484 to 507 (GRLH…IAAM), and 508 to 531 (TVLE…KFPG). An N-linked (GlcNAc...) asparagine glycan is attached at asparagine 91. Asparagine 158 is a glycosylation site (N-linked (GlcNAc...) asparagine). N-linked (GlcNAc...) asparagine glycosylation is present at asparagine 249. A glycan (N-linked (GlcNAc...) asparagine) is linked at asparagine 393. An N-linked (GlcNAc...) asparagine glycan is attached at asparagine 466. N-linked (GlcNAc...) asparagine glycosylation occurs at asparagine 514. A helical membrane pass occupies residues 574-597 (WVSLGAFCISTMTSFYVSLATLLC). Residues 598 to 613 (SSNARNFVFRPVRVEY) lie on the Cytoplasmic side of the membrane.

Expressed in ear primordia, vegetative apex and young leaf tissues. Barely detected in expanded leaf tissues and not expressed in roots.

The protein resides in the cell membrane. Functionally, receptor-like protein that regulates shoot meristem proliferation. Based on additive and synergistic phenotypes of double mutants, it is probable that unlike CLV1 and CLV2 in A.thaliana, FAE2 and TD1 do not function exclusively in a single pathway. The polypeptide is Leucine-rich repeat receptor-like protein FASCIATED EAR2 (FEA2) (Zea mays (Maize)).